Consider the following 370-residue polypeptide: 4-hydroxy-3-methylbut-2-en-1-yl diphosphate synthase (flavodoxin) (370 aa).

4 residues coordinate [4Fe-4S] cluster: Cys-270, Cys-273, Cys-305, and Glu-312.

It belongs to the IspG family. Requires [4Fe-4S] cluster as cofactor.

The catalysed reaction is (2E)-4-hydroxy-3-methylbut-2-enyl diphosphate + oxidized [flavodoxin] + H2O + 2 H(+) = 2-C-methyl-D-erythritol 2,4-cyclic diphosphate + reduced [flavodoxin]. It participates in isoprenoid biosynthesis; isopentenyl diphosphate biosynthesis via DXP pathway; isopentenyl diphosphate from 1-deoxy-D-xylulose 5-phosphate: step 5/6. Functionally, converts 2C-methyl-D-erythritol 2,4-cyclodiphosphate (ME-2,4cPP) into 1-hydroxy-2-methyl-2-(E)-butenyl 4-diphosphate. The chain is 4-hydroxy-3-methylbut-2-en-1-yl diphosphate synthase (flavodoxin) from Marinomonas sp. (strain MWYL1).